The chain runs to 139 residues: Transcription antitermination protein NusB (139 aa).

This sequence belongs to the NusB family.

Its function is as follows. Involved in transcription antitermination. Required for transcription of ribosomal RNA (rRNA) genes. Binds specifically to the boxA antiterminator sequence of the ribosomal RNA (rrn) operons. The chain is Transcription antitermination protein NusB from Erwinia tasmaniensis (strain DSM 17950 / CFBP 7177 / CIP 109463 / NCPPB 4357 / Et1/99).